The following is a 214-amino-acid chain: Insulin-like growth factor 2 (214 aa).

Positions 48 to 79 are b; that stretch reads EVASAETLCGGELVDALQFVCEDRGFYFSRPT. Intrachain disulfides connect Cys-56/Cys-97, Cys-68/Cys-110, and Cys-96/Cys-101. Residues 80-90 form a c region; that stretch reads SRSNSRRSQNR. The interval 91-111 is a; sequence GIVEECCFRSCDLNLLEQYCA. Positions 112-117 are d; it reads KPAKSE. A propeptide spans 118-214 (e peptide); it reads RDVSATSLQI…PPTDNYVSHN (97 aa).

It belongs to the insulin family.

The protein resides in the secreted. In terms of biological role, the insulin-like growth factors, isolated from plasma, are structurally and functionally related to insulin but have a much higher growth-promoting activity. Acts as a ligand for integrin which is required for IGF2 signaling. The sequence is that of Insulin-like growth factor 2 from Oncorhynchus mykiss (Rainbow trout).